Consider the following 349-residue polypeptide: UPF0284 protein MA_3887 (349 aa).

It belongs to the UPF0284 family.

This chain is UPF0284 protein MA_3887, found in Methanosarcina acetivorans (strain ATCC 35395 / DSM 2834 / JCM 12185 / C2A).